The sequence spans 521 residues: Probable methylmalonate-semialdehyde/malonate-semialdehyde dehydrogenase [acylating], mitochondrial (521 aa).

Residues A170, F172, K196, E199, R200, and S249 each contribute to the NAD(+) site. C304 functions as the Nucleophile in the catalytic mechanism. E404 contacts NAD(+).

The protein belongs to the aldehyde dehydrogenase family. Homotetramer.

It is found in the mitochondrion. It carries out the reaction 2-methyl-3-oxopropanoate + NAD(+) + CoA + H2O = propanoyl-CoA + hydrogencarbonate + NADH + H(+). The catalysed reaction is 3-oxopropanoate + NAD(+) + CoA + H2O = hydrogencarbonate + acetyl-CoA + NADH + H(+). Functionally, probable malonate and methylmalonate semialdehyde dehydrogenase involved in the catabolism of valine, thymine, and compounds catabolized by way of beta-alanine, including uracil and cytidine. This is Probable methylmalonate-semialdehyde/malonate-semialdehyde dehydrogenase [acylating], mitochondrial from Anopheles gambiae (African malaria mosquito).